The sequence spans 135 residues: Large ribosomal subunit protein uL16c (135 aa).

Belongs to the universal ribosomal protein uL16 family. Part of the 50S ribosomal subunit.

It is found in the plastid. The protein resides in the chloroplast. This is Large ribosomal subunit protein uL16c from Aethionema cordifolium (Lebanon stonecress).